A 388-amino-acid polypeptide reads, in one-letter code: Ovalbumin-related protein Y (388 aa).

Cys-74 and Cys-121 are disulfide-bonded. N-linked (GlcNAc...) asparagine glycans are attached at residues Asn-95, Asn-215, Asn-293, and Asn-312.

This sequence belongs to the serpin family. Ov-serpin subfamily. Post-translationally, N-glycosylated on at least two Asn residues by ovomucoid type carbohydrate units. The N-terminus is blocked. Major protein of egg white. Expressed in the magnum of the oviduct (at protein level).

The protein resides in the secreted. The protein is Ovalbumin-related protein Y (SERPINB14B) of Gallus gallus (Chicken).